The primary structure comprises 673 residues: Protein-arginine deiminase type-2 (673 aa).

Met-1 carries the N-acetylmethionine modification. Ca(2+) contacts are provided by Asp-131, Asp-133, Asp-135, Glu-139, Asn-162, Asp-164, Asp-166, Asp-174, Asp-177, Lys-179, Asp-185, and Asp-188. Arg-352 carries the citrulline modification. Ca(2+) contacts are provided by Glu-362, Asp-397, Phe-416, Leu-419, and Glu-420. Cys-655 serves as the catalytic Nucleophile.

Belongs to the protein arginine deiminase family. In terms of assembly, homodimer. The cofactor is Ca(2+). Expressed in various tissues including muscle, uterus, spinal cord, salivary gland and pancreas.

It is found in the cytoplasm. The catalysed reaction is L-arginyl-[protein] + H2O = L-citrullyl-[protein] + NH4(+). In terms of biological role, catalyzes the deimination of arginine residues of proteins. The chain is Protein-arginine deiminase type-2 (Padi2) from Mus musculus (Mouse).